The following is a 151-amino-acid chain: MVEELLSLLHALLDRHQALCMENHQLLKQLRLLVCERARLLRQVCPPSCPVPYPSRFSGESGRLPEFIMQTMSYMLANEEHFCNDAMKVAFLISLLSGEAEEWVMPYIESNSYVLGDYQAFVDEMKQYFGWGTDDEDDGDDDEEEEMEEDH.

A disordered region spans residues 132-151; sequence GTDDEDDGDDDEEEEMEEDH. A compositionally biased stretch (acidic residues) spans 133–151; that stretch reads TDDEDDGDDDEEEEMEEDH.

This sequence belongs to the LDOC1 family. In terms of assembly, interacts with NOD2.

Its subcellular location is the nucleus. Functionally, may have an important role in the development and/or progression of some cancers. The sequence is that of Protein LDOC1 (Ldoc1) from Mus musculus (Mouse).